The chain runs to 1154 residues: Voltage-dependent calcium channel subunit alpha-2/delta-2 (1154 aa).

The first 18 residues, 1–18 (MAVPARTCGASWPGPVRT), serve as a signal peptide directing secretion. Residues 1–37 (MAVPARTCGASWPGPVRTARPWPGRGPRPCPDPRGPA) are disordered. Residues 19–1116 (ARPWPGRGPR…TEDTSDCGRG (1098 aa)) lie on the Extracellular side of the membrane. A compositionally biased stretch (pro residues) spans 24–34 (GRGPRPCPDPR). An N-linked (GlcNAc...) asparagine glycan is attached at asparagine 205. A VWFA domain is found at 294-472 (DMVIIVDVSG…INTQEYLDVL (179 aa)). Positions 300, 302, and 304 each coordinate a divalent metal cation. The short motif at 300-304 (DVSGS) is the MIDAS-like motif element. Residues asparagine 389, asparagine 421, asparagine 510, asparagine 543, asparagine 627, and asparagine 864 are each glycosylated (N-linked (GlcNAc...) asparagine). An intrachain disulfide couples cysteine 446 to cysteine 1101. The Cache domain maps to 488–577 (WTNVYEDALG…KPQTTNFREP (90 aa)). A helical transmembrane segment spans residues 1117-1137 (ASFPPSLGVLVSLQLLLLLGL). Residues 1138–1154 (PPRPQPQVHSFAASRHL) lie on the Cytoplasmic side of the membrane.

Belongs to the calcium channel subunit alpha-2/delta family. As to quaternary structure, dimer formed of alpha-2-2 and delta-2 chains; disulfide-linked. Voltage-dependent calcium channels are multisubunit complexes, consisting of alpha-1 (CACNA1), alpha-2 (CACNA2D), beta (CACNB) and delta (CACNA2D) subunits in a 1:1:1:1 ratio. In terms of processing, N-glycosylated. Post-translationally, may be proteolytically processed into subunits alpha-2-2 and delta-2 that are disulfide-linked. It is however unclear whether such cleavage really takes place in vivo and has a functional role. According to PubMed:11306709, it is processed, at least in vitro, while according to PubMed:17052222, it is only poorly processed in vivo. In terms of tissue distribution, predominantly expressed in brain in a restricted pattern. Also expressed at lower level in kidney and testis Not expressed in lung at any moment of development. In brain, it localizes to sections of P21 brain. Expressed at high level in the cerebellum, with moderate levels in medulla, pons, and striatum. Also expressed in cortex, hippocampus, habenula and nucleus reticularis thalami (nRT). Strongly expressed in cerebellar Purkinje cells.

It localises to the membrane. In terms of biological role, the alpha-2/delta subunit of voltage-dependent calcium channels regulates calcium current density and activation/inactivation kinetics of the calcium channel. Acts as a regulatory subunit for P/Q-type calcium channel (CACNA1A), N-type (CACNA1B), L-type (CACNA1C OR CACNA1D) and possibly T-type (CACNA1G). This is Voltage-dependent calcium channel subunit alpha-2/delta-2 (Cacna2d2) from Mus musculus (Mouse).